The chain runs to 161 residues: Nucleotide-binding protein Spea_3114 (161 aa).

It belongs to the YajQ family.

Its function is as follows. Nucleotide-binding protein. This chain is Nucleotide-binding protein Spea_3114, found in Shewanella pealeana (strain ATCC 700345 / ANG-SQ1).